A 145-amino-acid polypeptide reads, in one-letter code: Small ribosomal subunit protein uS12 (145 aa).

The residue at position 64 (P64) is a Hydroxyproline.

This sequence belongs to the universal ribosomal protein uS12 family.

The protein is Small ribosomal subunit protein uS12 (rps23) of Aspergillus fumigatus (strain ATCC MYA-4609 / CBS 101355 / FGSC A1100 / Af293) (Neosartorya fumigata).